A 311-amino-acid polypeptide reads, in one-letter code: Tricarboxylate transport protein, mitochondrial (311 aa).

A propeptide spans 1 to 13 (MAAPRAPRALTAA) (removed in mature form). Solcar repeat units lie at residues 23 to 111 (THPG…LSNH), 122 to 208 (RRGL…LRNW), and 218 to 303 (MNPL…VVKL). The next 3 membrane-spanning stretches (helical) occupy residues 29-46 (ILAG…TFPT), 86-105 (GLSS…FGMF), and 129-143 (LGAG…VCPM). The residue at position 156 (Ser156) is a Phosphoserine. 3 helical membrane passes run 183-202 (GLTA…FFVM), 224-241 (GVFG…NTPL), and 278-297 (GTVP…FVIY).

Belongs to the mitochondrial carrier (TC 2.A.29) family. Possesses a short cleavable presequence, which, however, is found to be dispensable both for targeting to mitochondria and insertion into the inner membrane. However, the presequence is required to keep SLC25A1 in a soluble state and thus in an import-competent state. Mature SLC25A1 lacking the presequence is prone to aggregation.

Its subcellular location is the mitochondrion inner membrane. The catalysed reaction is (S)-malate(in) + citrate(out) = (S)-malate(out) + citrate(in). It carries out the reaction citrate(out) + succinate(in) = citrate(in) + succinate(out). It catalyses the reaction D-threo-isocitrate(in) + citrate(out) = D-threo-isocitrate(out) + citrate(in). The enzyme catalyses cis-aconitate(in) + citrate(out) = cis-aconitate(out) + citrate(in). The catalysed reaction is trans-aconitate(in) + citrate(out) = trans-aconitate(out) + citrate(in). It carries out the reaction phosphoenolpyruvate(in) + citrate(out) = phosphoenolpyruvate(out) + citrate(in). It catalyses the reaction maleate(in) + citrate(out) = maleate(out) + citrate(in). Its function is as follows. Mitochondrial electroneutral antiporter that exports citrate from the mitochondria into the cytosol in exchange for malate. Also able to mediate the exchange of citrate for isocitrate, phosphoenolpyruvate, cis-aconitate and to a lesser extent trans-aconitate, maleate and succinate. In the cytoplasm, citrate plays important roles in fatty acid and sterol synthesis, regulation of glycolysis, protein acetylation, and other physiopathological processes. In Rattus norvegicus (Rat), this protein is Tricarboxylate transport protein, mitochondrial (Slc25a1).